We begin with the raw amino-acid sequence, 163 residues long: Nucleotide-binding protein YajQ (163 aa).

Belongs to the YajQ family.

In terms of biological role, nucleotide-binding protein. The protein is Nucleotide-binding protein YajQ of Salmonella heidelberg (strain SL476).